The chain runs to 467 residues: Cysteine--tRNA ligase (467 aa).

Cysteine 28 is a Zn(2+) binding site. The short motif at 30–40 (MTVYDHCHLGH) is the 'HIGH' region element. Cysteine 209, histidine 234, and glutamate 238 together coordinate Zn(2+). The 'KMSKS' region signature appears at 266-270 (KMSKS). Residue lysine 269 coordinates ATP.

This sequence belongs to the class-I aminoacyl-tRNA synthetase family. In terms of assembly, monomer. Zn(2+) serves as cofactor.

Its subcellular location is the cytoplasm. It carries out the reaction tRNA(Cys) + L-cysteine + ATP = L-cysteinyl-tRNA(Cys) + AMP + diphosphate. This Nitrosomonas eutropha (strain DSM 101675 / C91 / Nm57) protein is Cysteine--tRNA ligase.